The chain runs to 396 residues: MAKAKFQRTKPHVNIGTIGHVDHGKTTLTAAITKVLHDKFPDLNETKAFDQIDNAPEERQRGITINIAHVEYQTDKRHYAHVDAPGHADYIKNMITGAAQMDGAILVVAATDGPMPQTREHVLLARQVGVPYILVALNKADAVDDEELLELVEMEVRELLAAQEFDEDAPVVRVSALKALEGDAKWVASVEELMNAVDESIPDPVRETDKPFLMPVEDVFTITGRGTVVTGRVERGVINVNEEVEIVGIRPSTTKTTVTGVEMFRKLLDQGQAGDNVGLLLRGVKREDVERGQVVTKPGTTTPHTEFEGQVYILSKDEGGRHTPFFNNYRPQFYFRTTDVTGVVTLPEGTEMVMPGDNTNISVKLIQPVAMDEGLRFAIREGGRTVGAGRVTKIIK.

The tr-type G domain maps to 10 to 205 (KPHVNIGTIG…AVDESIPDPV (196 aa)). A G1 region spans residues 19–26 (GHVDHGKT). Residue 19–26 (GHVDHGKT) coordinates GTP. A Mg(2+)-binding site is contributed by threonine 26. Residues 62–66 (GITIN) form a G2 region. The interval 83 to 86 (DAPG) is G3. Residues 83 to 87 (DAPGH) and 138 to 141 (NKAD) contribute to the GTP site. The segment at 138 to 141 (NKAD) is G4. The segment at 175–177 (SAL) is G5.

Belongs to the TRAFAC class translation factor GTPase superfamily. Classic translation factor GTPase family. EF-Tu/EF-1A subfamily. In terms of assembly, monomer.

It localises to the cytoplasm. The enzyme catalyses GTP + H2O = GDP + phosphate + H(+). GTP hydrolase that promotes the GTP-dependent binding of aminoacyl-tRNA to the A-site of ribosomes during protein biosynthesis. The polypeptide is Elongation factor Tu (Mycobacterium bovis (strain ATCC BAA-935 / AF2122/97)).